The chain runs to 264 residues: S-adenosylmethionine decarboxylase proenzyme (264 aa).

The Schiff-base intermediate with substrate; via pyruvic acid role is filled by S112. S112 is modified (pyruvic acid (Ser); by autocatalysis). H117 serves as the catalytic Proton acceptor; for processing activity. C140 acts as the Proton donor; for catalytic activity in catalysis.

This sequence belongs to the prokaryotic AdoMetDC family. Type 2 subfamily. As to quaternary structure, heterooctamer of four alpha and four beta chains arranged as a tetramer of alpha/beta heterodimers. It depends on pyruvate as a cofactor. Is synthesized initially as an inactive proenzyme. Formation of the active enzyme involves a self-maturation process in which the active site pyruvoyl group is generated from an internal serine residue via an autocatalytic post-translational modification. Two non-identical subunits are generated from the proenzyme in this reaction, and the pyruvate is formed at the N-terminus of the alpha chain, which is derived from the carboxyl end of the proenzyme. The post-translation cleavage follows an unusual pathway, termed non-hydrolytic serinolysis, in which the side chain hydroxyl group of the serine supplies its oxygen atom to form the C-terminus of the beta chain, while the remainder of the serine residue undergoes an oxidative deamination to produce ammonia and the pyruvoyl group blocking the N-terminus of the alpha chain.

The enzyme catalyses S-adenosyl-L-methionine + H(+) = S-adenosyl 3-(methylsulfanyl)propylamine + CO2. The protein operates within amine and polyamine biosynthesis; S-adenosylmethioninamine biosynthesis; S-adenosylmethioninamine from S-adenosyl-L-methionine: step 1/1. Its function is as follows. Catalyzes the decarboxylation of S-adenosylmethionine to S-adenosylmethioninamine (dcAdoMet), the propylamine donor required for the synthesis of the polyamines spermine and spermidine from the diamine putrescine. This is S-adenosylmethionine decarboxylase proenzyme from Salmonella dublin (strain CT_02021853).